We begin with the raw amino-acid sequence, 309 residues long: Elongation factor Ts (309 aa).

The involved in Mg(2+) ion dislocation from EF-Tu stretch occupies residues 98–101 (TDFV).

This sequence belongs to the EF-Ts family.

Its subcellular location is the cytoplasm. Associates with the EF-Tu.GDP complex and induces the exchange of GDP to GTP. It remains bound to the aminoacyl-tRNA.EF-Tu.GTP complex up to the GTP hydrolysis stage on the ribosome. The sequence is that of Elongation factor Ts from Orientia tsutsugamushi (strain Boryong) (Rickettsia tsutsugamushi).